The chain runs to 74 residues: uncharacterized protein (74 aa).

The signal sequence occupies residues 1–25; it reads MMMTDLPENIRKTAVALLRLGEATA.

This is an uncharacterized protein from Archaeoglobus fulgidus (strain ATCC 49558 / DSM 4304 / JCM 9628 / NBRC 100126 / VC-16).